The primary structure comprises 321 residues: Isoaspartyl peptidase (321 aa).

Residue Thr-179 is the Nucleophile of the active site. Residues 207–210 and 230–233 contribute to the substrate site; these read RVGD and TGTG.

It belongs to the Ntn-hydrolase family. In terms of assembly, heterotetramer of two alpha and two beta chains arranged as a dimer of alpha/beta heterodimers. Autocleaved. Generates the alpha and beta subunits. The N-terminal residue of the beta subunit is thought to be responsible for the nucleophile hydrolase activity. Post-translationally, both subunits undergo further processing at their C-termini. The overexpressed alpha subunit seems to consist of residues 2-161, with an oxidized Met residue and a tightly coordinated Na(+), whereas the overexpressed beta subunit is processed to residue 315 and has 3 oxidized Met residues. Processing of the alpha subunit is inhibited by Zn(2+).

It carries out the reaction Cleavage of a beta-linked Asp residue from the N-terminus of a polypeptide.. Its function is as follows. Degrades proteins damaged by L-isoaspartyl residue formation (also known as beta-Asp residues). Degrades L-isoaspartyl-containing di- and maybe also tripeptides. Also has L-asparaginase activity, although this may not be its principal function. Functionally, may be involved in glutathione, and possibly other peptide, transport, although these results could also be due to polar effects of disruption. This is Isoaspartyl peptidase (iaaA) from Escherichia coli (strain K12).